The chain runs to 455 residues: Membrane-bound lytic murein transglycosylase F (455 aa).

Residues 1–21 (MPKSAVSLFAILLLAASVITA) form the signal peptide. Positions 22–264 (CSPQTRPDAM…HIKEQHFGHV (243 aa)) are non-LT domain. An LT domain region spans residues 265–455 (KQFNYVTTSL…LKYLDEQGRL (191 aa)). E309 is a catalytic residue.

It in the N-terminal section; belongs to the bacterial solute-binding protein 3 family. This sequence in the C-terminal section; belongs to the transglycosylase Slt family.

It is found in the cell outer membrane. It catalyses the reaction Exolytic cleavage of the (1-&gt;4)-beta-glycosidic linkage between N-acetylmuramic acid (MurNAc) and N-acetylglucosamine (GlcNAc) residues in peptidoglycan, from either the reducing or the non-reducing ends of the peptidoglycan chains, with concomitant formation of a 1,6-anhydrobond in the MurNAc residue.. Its function is as follows. Murein-degrading enzyme that degrades murein glycan strands and insoluble, high-molecular weight murein sacculi, with the concomitant formation of a 1,6-anhydromuramoyl product. Lytic transglycosylases (LTs) play an integral role in the metabolism of the peptidoglycan (PG) sacculus. Their lytic action creates space within the PG sacculus to allow for its expansion as well as for the insertion of various structures such as secretion systems and flagella. The polypeptide is Membrane-bound lytic murein transglycosylase F (Idiomarina loihiensis (strain ATCC BAA-735 / DSM 15497 / L2-TR)).